The following is a 751-amino-acid chain: Photosystem I P700 chlorophyll a apoprotein A1 (751 aa).

8 helical membrane passes run 73–96 (IFSAHFGQLGVILIWLSGMYFHGA), 159–182 (LYSTAIGGLLLAAAMFFAGWFHYH), 198–222 (MNHHLGGLLGLGSLGWAGHQIHVSL), 294–312 (TAHHHVAIAVLFLVAGHMY), 349–372 (WHAQLAINLALFGSLSIVVAHHMY), 388–414 (LSLFTHHMWIGGFCVVGAAAHAAIFMV), 436–458 (AIISHLNWVCIFLGFHSFGLYIH), and 533–551 (FLVHHIHAFTIHVTVLILL). [4Fe-4S] cluster is bound by residues Cys575 and Cys584. 2 consecutive transmembrane segments (helical) span residues 591-612 (HVFLGLFWMYNSISVVIFHFSW) and 665-687 (LSAYGLIFLGAHFIWAFSLMFLF). His676 provides a ligand contact to chlorophyll a'. Chlorophyll a-binding residues include Met684 and Tyr692. Trp693 lines the phylloquinone pocket. The chain crosses the membrane as a helical span at residues 725–745 (AVGVAHYLLGGIATTWAFFLA).

It belongs to the PsaA/PsaB family. In terms of assembly, the PsaA/B heterodimer binds the P700 chlorophyll special pair and subsequent electron acceptors. PSI consists of a core antenna complex that captures photons, and an electron transfer chain that converts photonic excitation into a charge separation. The eukaryotic PSI reaction center is composed of at least 11 subunits. Requires P700 is a chlorophyll a/chlorophyll a' dimer, A0 is one or more chlorophyll a, A1 is one or both phylloquinones and FX is a shared 4Fe-4S iron-sulfur center. as cofactor.

It localises to the plastid. Its subcellular location is the chloroplast thylakoid membrane. It carries out the reaction reduced [plastocyanin] + hnu + oxidized [2Fe-2S]-[ferredoxin] = oxidized [plastocyanin] + reduced [2Fe-2S]-[ferredoxin]. Functionally, psaA and PsaB bind P700, the primary electron donor of photosystem I (PSI), as well as the electron acceptors A0, A1 and FX. PSI is a plastocyanin/cytochrome c6-ferredoxin oxidoreductase, converting photonic excitation into a charge separation, which transfers an electron from the donor P700 chlorophyll pair to the spectroscopically characterized acceptors A0, A1, FX, FA and FB in turn. Oxidized P700 is reduced on the lumenal side of the thylakoid membrane by plastocyanin or cytochrome c6. In Nephroselmis olivacea (Green alga), this protein is Photosystem I P700 chlorophyll a apoprotein A1.